The following is a 271-amino-acid chain: Neurexophilin-1 (271 aa).

The first 21 residues, 1 to 21, serve as a signal peptide directing secretion; the sequence is MQAACWYVLLLLQPTVYLVTC. Residues 22 to 97 form an II region; it reads ANLTNGGKSE…WDWLRNSTDL (76 aa). 6 N-linked (GlcNAc...) asparagine glycosylation sites follow: Asn-23, Asn-68, Asn-93, Asn-146, Asn-156, and Asn-162. Residues 98 to 176 are III; it reads QEPRPRAKRR…LVPPTKIVEF (79 aa). The interval 177–185 is IV (linker domain); it reads DLAQQTVID. The v (Cys-rich) stretch occupies residues 186–271; sequence AKDSKSFNCR…HSDTPYFPSG (86 aa).

This sequence belongs to the neurexophilin family. In terms of processing, may be proteolytically processed at the boundary between the N-terminal non-conserved and the central conserved domain in neuron-like cells. In terms of tissue distribution, highest level in brain.

It is found in the secreted. May be signaling molecules that resemble neuropeptides. Ligand for alpha-neurexins. The polypeptide is Neurexophilin-1 (Nxph1) (Rattus norvegicus (Rat)).